Here is a 362-residue protein sequence, read N- to C-terminus: Putative integrase ORF3 (362 aa).

The Integrase catalytic domain maps to Tyr179–Ser359. Mg(2+) contacts are provided by Asp190 and Asp256.

It belongs to the plectrovirus integrase ORF3 family.

Functionally, this protein may encode an integrase, which is necessary for integration of the viral DNA into host genome. The sequence is that of Putative integrase ORF3 from Spiroplasma melliferum (SpV1).